The following is a 322-amino-acid chain: Phosphatidylserine decarboxylase proenzyme (322 aa).

Catalysis depends on charge relay system; for autoendoproteolytic cleavage activity residues aspartate 90, histidine 147, and serine 254. Residue serine 254 is the Schiff-base intermediate with substrate; via pyruvic acid; for decarboxylase activity of the active site. A Pyruvic acid (Ser); by autocatalysis modification is found at serine 254.

The protein belongs to the phosphatidylserine decarboxylase family. PSD-B subfamily. Prokaryotic type I sub-subfamily. In terms of assembly, heterodimer of a large membrane-associated beta subunit and a small pyruvoyl-containing alpha subunit. The cofactor is pyruvate. In terms of processing, is synthesized initially as an inactive proenzyme. Formation of the active enzyme involves a self-maturation process in which the active site pyruvoyl group is generated from an internal serine residue via an autocatalytic post-translational modification. Two non-identical subunits are generated from the proenzyme in this reaction, and the pyruvate is formed at the N-terminus of the alpha chain, which is derived from the carboxyl end of the proenzyme. The autoendoproteolytic cleavage occurs by a canonical serine protease mechanism, in which the side chain hydroxyl group of the serine supplies its oxygen atom to form the C-terminus of the beta chain, while the remainder of the serine residue undergoes an oxidative deamination to produce ammonia and the pyruvoyl prosthetic group on the alpha chain. During this reaction, the Ser that is part of the protease active site of the proenzyme becomes the pyruvoyl prosthetic group, which constitutes an essential element of the active site of the mature decarboxylase.

Its subcellular location is the cell membrane. It catalyses the reaction a 1,2-diacyl-sn-glycero-3-phospho-L-serine + H(+) = a 1,2-diacyl-sn-glycero-3-phosphoethanolamine + CO2. It participates in phospholipid metabolism; phosphatidylethanolamine biosynthesis; phosphatidylethanolamine from CDP-diacylglycerol: step 2/2. Functionally, catalyzes the formation of phosphatidylethanolamine (PtdEtn) from phosphatidylserine (PtdSer). This Shigella dysenteriae serotype 1 (strain Sd197) protein is Phosphatidylserine decarboxylase proenzyme.